Consider the following 388-residue polypeptide: Xylose isomerase (388 aa).

Catalysis depends on residues His-54 and Asp-57. Residues Glu-181, Glu-217, His-220, Asp-245, Asp-255, Asp-257, and Asp-287 each contribute to the Mg(2+) site.

Belongs to the xylose isomerase family. In terms of assembly, homotetramer. The cofactor is Mg(2+).

The protein localises to the cytoplasm. It catalyses the reaction alpha-D-xylose = alpha-D-xylulofuranose. Functionally, involved in D-xylose catabolism. The chain is Xylose isomerase (xylA) from Streptomyces rubiginosus.